Reading from the N-terminus, the 197-residue chain is dITP/XTP pyrophosphatase (197 aa).

Position 8–13 (8–13 (TKNKGK)) interacts with substrate. The Mg(2+) site is built by glutamate 42 and aspartate 71. Aspartate 71 acts as the Proton acceptor in catalysis. Residues serine 72, 154-157 (FGYD), lysine 177, and 182-183 (HR) each bind substrate.

This sequence belongs to the HAM1 NTPase family. Homodimer. Mg(2+) serves as cofactor.

The enzyme catalyses XTP + H2O = XMP + diphosphate + H(+). It catalyses the reaction dITP + H2O = dIMP + diphosphate + H(+). It carries out the reaction ITP + H2O = IMP + diphosphate + H(+). Its function is as follows. Pyrophosphatase that catalyzes the hydrolysis of nucleoside triphosphates to their monophosphate derivatives, with a high preference for the non-canonical purine nucleotides XTP (xanthosine triphosphate), dITP (deoxyinosine triphosphate) and ITP. Seems to function as a house-cleaning enzyme that removes non-canonical purine nucleotides from the nucleotide pool, thus preventing their incorporation into DNA/RNA and avoiding chromosomal lesions. The protein is dITP/XTP pyrophosphatase of Oceanobacillus iheyensis (strain DSM 14371 / CIP 107618 / JCM 11309 / KCTC 3954 / HTE831).